A 400-amino-acid polypeptide reads, in one-letter code: Enolase (400 aa).

Q153 serves as a coordination point for (2R)-2-phosphoglycerate. Residue E195 is the Proton donor of the active site. Mg(2+) contacts are provided by D231, E274, and D301. Positions 326, 355, 356, and 377 each coordinate (2R)-2-phosphoglycerate. K326 functions as the Proton acceptor in the catalytic mechanism.

Belongs to the enolase family. Requires Mg(2+) as cofactor.

Its subcellular location is the cytoplasm. It localises to the secreted. It is found in the cell surface. The enzyme catalyses (2R)-2-phosphoglycerate = phosphoenolpyruvate + H2O. It participates in carbohydrate degradation; glycolysis; pyruvate from D-glyceraldehyde 3-phosphate: step 4/5. Catalyzes the reversible conversion of 2-phosphoglycerate (2-PG) into phosphoenolpyruvate (PEP). It is essential for the degradation of carbohydrates via glycolysis. The chain is Enolase from Halorubrum lacusprofundi (strain ATCC 49239 / DSM 5036 / JCM 8891 / ACAM 34).